Consider the following 1103-residue polypeptide: Retinal guanylyl cyclase 1 (1103 aa).

The signal sequence occupies residues 1–51 (MTACARRAGGLPDPGLCGPAWWAPSLPRLPRALPRLPLLLLLLLLQPPALS). The Extracellular segment spans residues 52–462 (AVFTVGVLGP…PNNICGGGLE (411 aa)). The N-linked (GlcNAc...) asparagine glycan is linked to Asn-297. The chain crosses the membrane as a helical span at residues 463–487 (PGLVFLGFLLVVGMGLAGAFLAHYV). The Cytoplasmic segment spans residues 488-1103 (RHRLLHMQMV…LEKARPGQFS (616 aa)). In terms of domain architecture, Protein kinase spans 525–808 (QGSRSSLGAR…DHTFDLFKNI (284 aa)). The Guanylate cyclase domain maps to 880-1010 (TLYFSDIVGF…DTVNTASRME (131 aa)). The disordered stretch occupies residues 1065–1103 (PIPKPPDLQPGSSNHGISLQEIPPERRRKLEKARPGQFS).

The protein belongs to the adenylyl cyclase class-4/guanylyl cyclase family. Homodimer; requires homodimerization for guanylyl cyclase activity. Interacts with RD3; promotes the exit of GUCY2D from the endoplasmic reticulum and its trafficking to the photoreceptor outer segments. Interaction with RD3 negatively regulates guanylate cyclase activity. Retina.

The protein resides in the photoreceptor outer segment membrane. The protein localises to the endoplasmic reticulum membrane. The catalysed reaction is GTP = 3',5'-cyclic GMP + diphosphate. With respect to regulation, activated by GUCA1A when free calcium ions concentration is low, and inhibited by GUCA1A when free calcium ions concentration is high. Negatively regulated by RD3; inhibits the basal and GUCA1A-stimulated guanylate cyclase activity. Functionally, catalyzes the synthesis of cyclic GMP (cGMP) in rods and cones of photoreceptors. Plays an essential role in phototransduction, by mediating cGMP replenishment. May also participate in the trafficking of membrane-asociated proteins to the photoreceptor outer segment membrane. The protein is Retinal guanylyl cyclase 1 (GUCY2D) of Homo sapiens (Human).